Here is a 559-residue protein sequence, read N- to C-terminus: Thermosome subunit alpha (559 aa).

Residues 535–547 (SEKKGGEGSKEES) are compositionally biased toward basic and acidic residues. The disordered stretch occupies residues 535–559 (SEKKGGEGSKEESGGEGGSTPSLGD).

This sequence belongs to the TCP-1 chaperonin family. In terms of assembly, forms a Heterooligomeric complex of two stacked eight-membered rings.

Molecular chaperone; binds unfolded polypeptides in vitro, and has a weak ATPase activity. This Saccharolobus solfataricus (strain ATCC 35092 / DSM 1617 / JCM 11322 / P2) (Sulfolobus solfataricus) protein is Thermosome subunit alpha (thsA).